The primary structure comprises 211 residues: 3-demethoxyubiquinol 3-hydroxylase (211 aa).

The Fe cation site is built by Glu60, Glu90, His93, Glu142, Glu174, and His177.

Belongs to the COQ7 family. Requires Fe cation as cofactor.

It is found in the cell membrane. The enzyme catalyses a 5-methoxy-2-methyl-3-(all-trans-polyprenyl)benzene-1,4-diol + AH2 + O2 = a 3-demethylubiquinol + A + H2O. It participates in cofactor biosynthesis; ubiquinone biosynthesis. Its function is as follows. Catalyzes the hydroxylation of 2-nonaprenyl-3-methyl-6-methoxy-1,4-benzoquinol during ubiquinone biosynthesis. The chain is 3-demethoxyubiquinol 3-hydroxylase from Acinetobacter baylyi (strain ATCC 33305 / BD413 / ADP1).